Reading from the N-terminus, the 309-residue chain is MIKIYAPASVANVGVGFDILGAAIIPINGTLLGDCVTVKLSKKFELINKGIFSNKLPINKEQNIVWKCWFKFCKVIKKNIPVSIILEKNMPIGSGLGSSACSVVATLVAINQICNNPLNSKELLLLMGEIEGEISGSIHYDNVAPSYLGGLQLILEDSDIISQKIPNFKHWFWIIAWPGIKVSTAEARKILPKEYKKDICIKNSRYLAGFIHASYTKQSHLAARCMQDFIAEPYRSKLLPNFLNAKEKIKKIGAISCGISGSGPTIFAISDKIKTAEKISLWLKNNYLQNKTGFVHICAVDVKGVRKIG.

91–101 provides a ligand contact to ATP; it reads PIGSGLGSSAC.

Belongs to the GHMP kinase family. Homoserine kinase subfamily.

It localises to the cytoplasm. It catalyses the reaction L-homoserine + ATP = O-phospho-L-homoserine + ADP + H(+). Its pathway is amino-acid biosynthesis; L-threonine biosynthesis; L-threonine from L-aspartate: step 4/5. Catalyzes the ATP-dependent phosphorylation of L-homoserine to L-homoserine phosphate. This chain is Homoserine kinase, found in Buchnera aphidicola subsp. Schizaphis graminum (strain Sg).